A 217-amino-acid polypeptide reads, in one-letter code: Uracil-DNA glycosylase (217 aa).

Asp62 serves as the catalytic Proton acceptor.

The protein belongs to the uracil-DNA glycosylase (UDG) superfamily. UNG family.

Its subcellular location is the cytoplasm. It carries out the reaction Hydrolyzes single-stranded DNA or mismatched double-stranded DNA and polynucleotides, releasing free uracil.. In terms of biological role, excises uracil residues from the DNA which can arise as a result of misincorporation of dUMP residues by DNA polymerase or due to deamination of cytosine. The protein is Uracil-DNA glycosylase of Streptococcus sanguinis (strain SK36).